The following is a 75-amino-acid chain: Large ribosomal subunit protein bL31 (75 aa).

The protein belongs to the bacterial ribosomal protein bL31 family. Type A subfamily. Part of the 50S ribosomal subunit.

Binds the 23S rRNA. In Chlorobium phaeobacteroides (strain BS1), this protein is Large ribosomal subunit protein bL31.